We begin with the raw amino-acid sequence, 61 residues long: Small ribosomal subunit protein uS14B (61 aa).

Zn(2+) is bound by residues cysteine 24, cysteine 27, cysteine 40, and cysteine 43.

This sequence belongs to the universal ribosomal protein uS14 family. Zinc-binding uS14 subfamily. As to quaternary structure, part of the 30S ribosomal subunit. Contacts proteins S3 and S10. Requires Zn(2+) as cofactor.

Functionally, binds 16S rRNA, required for the assembly of 30S particles and may also be responsible for determining the conformation of the 16S rRNA at the A site. This Streptococcus pyogenes serotype M6 (strain ATCC BAA-946 / MGAS10394) protein is Small ribosomal subunit protein uS14B.